Here is a 103-residue protein sequence, read N- to C-terminus: MIVTTTSGIQGKEIIEYIDIVNGEAIMGANIVRDLFASVRDVVGGRAGSYESKLKEARDIAMDEMKELAKQKGANAIVGIDVDYEVVRDGMLMVAVSGTAVRI.

Belongs to the UPF0145 family.

This chain is UPF0145 protein BCE_1095, found in Bacillus cereus (strain ATCC 10987 / NRS 248).